Consider the following 172-residue polypeptide: Resuscitation-promoting factor RpfE (172 aa).

The signal sequence occupies residues 1-28 (MKNARTTLIAAAIAGTLVTTSPAGIANA). Residues 33–89 (LDPNAAAGPDAVGFDPNLPPAPDAAPVDTPPAPEDAGFDPNLPPPLAPDFLSPPAEE) are disordered. Residues 49–65 (NLPPAPDAAPVDTPPAP) show a composition bias toward pro residues.

The protein belongs to the transglycosylase family. Rpf subfamily. In terms of assembly, interacts with RipA.

Its function is as follows. Factor that stimulates resuscitation of dormant cells. Has peptidoglycan (PG) hydrolytic activity. Active in the pM concentration range. Has little to no effect on actively-growing cells. PG fragments could either directly activate the resuscitation pathway of dormant bacteria or serve as a substrate for endogenous Rpf, resulting in low molecular weight products with resuscitation activity. Stimulates growth of stationary phase M.bovis (a slow-growing Mycobacterium), reduces the lag phase of diluted fast-growers M.smegmatis and Micrococcus luteus. Sequential gene disruption indicates RpfB and RpfE are higher than RpfD and RpfC in functional hierarchy. This is Resuscitation-promoting factor RpfE (rpfE) from Mycobacterium tuberculosis (strain ATCC 25618 / H37Rv).